We begin with the raw amino-acid sequence, 196 residues long: GTP cyclohydrolase-2 (196 aa).

Residue 49 to 53 (RVHSE) participates in GTP binding. Cys54, Cys65, and Cys67 together coordinate Zn(2+). Residues Gln70, 92–94 (EGR), and Thr114 contribute to the GTP site. Asp126 serves as the catalytic Proton acceptor. Arg128 acts as the Nucleophile in catalysis. Positions 149 and 154 each coordinate GTP.

The protein belongs to the GTP cyclohydrolase II family. As to quaternary structure, homodimer. It depends on Zn(2+) as a cofactor.

It catalyses the reaction GTP + 4 H2O = 2,5-diamino-6-hydroxy-4-(5-phosphoribosylamino)-pyrimidine + formate + 2 phosphate + 3 H(+). It functions in the pathway cofactor biosynthesis; riboflavin biosynthesis; 5-amino-6-(D-ribitylamino)uracil from GTP: step 1/4. In terms of biological role, catalyzes the conversion of GTP to 2,5-diamino-6-ribosylamino-4(3H)-pyrimidinone 5'-phosphate (DARP), formate and pyrophosphate. The chain is GTP cyclohydrolase-2 from Escherichia coli O45:K1 (strain S88 / ExPEC).